Here is a 392-residue protein sequence, read N- to C-terminus: PMA1 stabilization in the Golgi protein 1 (392 aa).

The N-terminal stretch at 1–22 (MRFHDSILIFFSLASLYQHVHG) is a signal peptide. O-linked (Man) threonine glycosylation is found at T34 and T35. The O-linked (Man) serine glycan is linked to S36. A glycan (O-linked (Man) threonine) is linked at T45. Residue S49 is glycosylated (O-linked (Man) serine). 3 O-linked (Man) threonine glycosylation sites follow: T55, T57, and T63. S65 carries an O-linked (Man) serine glycan. Residue T71 is glycosylated (O-linked (Man) threonine). O-linked (Man) serine glycosylation occurs at S80. Residues T89 and T99 are each glycosylated (O-linked (Man) threonine). An O-linked (Man) serine glycan is attached at S107. 2 O-linked (Man) threonine glycosylation sites follow: T108 and T112. O-linked (Man) serine glycosylation is found at S114 and S115. A glycan (O-linked (Man) threonine) is linked at T117. S119 and S148 each carry an O-linked (Man) serine glycan. O-linked (Man) threonine glycosylation occurs at T156. S171 carries O-linked (Man) serine glycosylation. O-linked (Man) threonine glycosylation occurs at T176. S181 is a glycosylation site (O-linked (Man) serine). Residues T188, T192, T195, and T199 are each glycosylated (O-linked (Man) threonine). O-linked (Man) serine glycosylation is found at S203 and S215. At 230 to 317 (DIPATFFSSE…DAGITNDQWY (88 aa)) the chain is on the lumenal side. Residues 318–338 (YVALSIPTVVVVFFVFMYFFL) form a helical membrane-spanning segment. The Cytoplasmic portion of the chain corresponds to 339–392 (YVNGKNRDFTDVTRKALNKKRRVLGKFSEMKKFKNMKNHKYTELPSYKKTSKQN).

Interacts with EXP1. PSG1-N' interacts with ERAD-related proteins involved in PMA1 quality control including EPS1, CDC48, UBX2 and SSM4. PSG1-C' interacts with the TLG1/2 SNARE complex proteins TLG1, TLG2 and VTI1. Post-translationally, the precursor protein is cleaved into two polypeptide chains, PSG1-N' and PSG1-C'. The cleavage is performed in the Golgi apparatus by Ca(+)-dependent serine protease KEX2 between Arg-229 and Asp-230. In terms of processing, PSG1-N' is highly O-mannosylated.

Its subcellular location is the golgi apparatus lumen. It localises to the cytoplasmic vesicle. The protein resides in the COPI-coated vesicle membrane. With EXP1, the specific cargo receptor protein for the plasma membrane ATPase PMA1, is involved in the transport and/or maturation of PMA1. EXP1 and PSG1 probably act sequentially to promote PMA1 sorting between the ER and the Golgi, with EXP1 promoting PMA1 export from the ER to the Golgi while PSG1 has a role in PMA1 maturation or quality control in the Golgi. PSG1 might also couple PMA1 sorting and maturation in the early secretory pathway with the glycosylation machinery. In terms of biological role, PSG1 is cleaved by KEX2 in two stable peptides, PSG1-N' and PSG1-C', the former supporting a role in maturation quality control, the latter having a role in modulating vesicular trafficking. The sequence is that of PMA1 stabilization in the Golgi protein 1 from Saccharomyces cerevisiae (strain ATCC 204508 / S288c) (Baker's yeast).